A 439-amino-acid chain; its full sequence is Glutamine synthetase (439 aa).

One can recognise a GS beta-grasp domain in the interval 12–93; the sequence is SKIKFVQLVF…VYGFIYKDNK (82 aa). The GS catalytic domain maps to 99-439; it reads PRGILKRALE…EWELERYFFL (341 aa). Mg(2+) contacts are provided by E122 and E124. ATP is bound at residue E172. Mg(2+) is bound by residues E177 and E184. G229 lines the L-glutamate pocket. Position 233 (H233) interacts with Mg(2+). ATP is bound by residues 235–237 and S237; that span reads HIS. R283, E289, and R301 together coordinate L-glutamate. ATP-binding residues include R301, R306, and K313. E318 serves as a coordination point for Mg(2+). Position 320 (R320) interacts with L-glutamate.

This sequence belongs to the glutamine synthetase family. In terms of assembly, oligomer of 12 subunits arranged in the form of two hexagons. Mg(2+) serves as cofactor.

The protein resides in the cytoplasm. It catalyses the reaction L-glutamate + NH4(+) + ATP = L-glutamine + ADP + phosphate + H(+). Functionally, probably involved in nitrogen metabolism via ammonium assimilation. Catalyzes the ATP-dependent biosynthesis of glutamine from glutamate and ammonia. The protein is Glutamine synthetase of Pyrococcus woesei.